Consider the following 351-residue polypeptide: Leukotriene B4 receptor 1 (351 aa).

The Extracellular portion of the chain corresponds to methionine 1–leucine 21. N-linked (GlcNAc...) asparagine glycosylation occurs at asparagine 4. The helical transmembrane segment at leucine 22–serine 44 threads the bilayer. The Cytoplasmic portion of the chain corresponds to isoleucine 45–alanine 56. A helical membrane pass occupies residues leucine 57–leucine 77. Topologically, residues histidine 78–arginine 93 are extracellular. Residues leucine 94 to leucine 115 traverse the membrane as a helical segment. The Cytoplasmic segment spans residues aspartate 116–leucine 140. The helical transmembrane segment at alanine 141–lysine 161 threads the bilayer. At tryptophan 162–lysine 179 the chain is on the extracellular side. The N-linked (GlcNAc...) asparagine glycan is linked to asparagine 164. Residues valine 180 to alanine 200 form a helical membrane-spanning segment. At serine 201 to arginine 222 the chain is on the cytoplasmic side. Residues leucine 223–leucine 243 traverse the membrane as a helical segment. Residues valine 244–tyrosine 268 are Extracellular-facing. Residues valine 269–glycine 289 traverse the membrane as a helical segment. Residues glycine 290–lysine 351 are Cytoplasmic-facing. Polar residues-rich tracts occupy residues glutamate 311 to lysine 326 and serine 339 to lysine 351. The interval glutamate 311 to lysine 351 is disordered.

The protein belongs to the G-protein coupled receptor 1 family. In terms of processing, phosphorylated by GRK6 upon leukotriene B4 binding; which promotes desensitization. As to expression, highly expressed on activated leukocytes, including eosinophils.

It localises to the cell membrane. In terms of biological role, receptor for leukotriene B4, a potent chemoattractant involved in inflammation and immune response. The sequence is that of Leukotriene B4 receptor 1 (Ltb4r) from Mus musculus (Mouse).